Reading from the N-terminus, the 196-residue chain is Imidazoleglycerol-phosphate dehydratase (196 aa).

Belongs to the imidazoleglycerol-phosphate dehydratase family.

Its subcellular location is the cytoplasm. It carries out the reaction D-erythro-1-(imidazol-4-yl)glycerol 3-phosphate = 3-(imidazol-4-yl)-2-oxopropyl phosphate + H2O. The protein operates within amino-acid biosynthesis; L-histidine biosynthesis; L-histidine from 5-phospho-alpha-D-ribose 1-diphosphate: step 6/9. This Clostridium novyi (strain NT) protein is Imidazoleglycerol-phosphate dehydratase.